The following is a 757-amino-acid chain: RNA-directed RNA polymerase catalytic subunit (757 aa).

Positions 50–82 are disordered; that stretch reads SEKGKWTTNTETGAPQLNPIDGPLPEDNEPSGY. Polar residues predominate over residues 55 to 64; that stretch reads WTTNTETGAP. Short sequence motifs (nuclear localization signal) lie at residues 187–195 and 203–216; these read RKRRVRDNM and RTIG…NKRS. The segment at 249–256 is promoter-binding site; sequence RGFVYFVE. The 198-residue stretch at 286–483 folds into the RdRp catalytic domain; the sequence is VRKMMTNSQD…GINMSKKKSY (198 aa).

This sequence belongs to the influenza viruses polymerase PB1 family. In terms of assembly, influenza RNA polymerase is composed of three subunits: PB1, PB2 and PA. Interacts (via N-terminus) with PA (via C-terminus). Interacts (via C-terminus) with PB2 (via N-terminus); this interaction is essential for transcription initiation. In terms of processing, phosphorylated by host PRKCA.

It is found in the host nucleus. The protein localises to the host cytoplasm. The catalysed reaction is RNA(n) + a ribonucleoside 5'-triphosphate = RNA(n+1) + diphosphate. RNA-dependent RNA polymerase which is responsible for replication and transcription of virus RNA segments. The transcription of viral mRNAs occurs by a unique mechanism called cap-snatching. 5' methylated caps of cellular mRNAs are cleaved after 10-13 nucleotides by PA. In turn, these short capped RNAs are used as primers by PB1 for transcription of viral mRNAs. During virus replication, PB1 initiates RNA synthesis and copy vRNA into complementary RNA (cRNA) which in turn serves as a template for the production of more vRNAs. In Influenza A virus (strain A/Duck/Germany/1949 H10N7), this protein is RNA-directed RNA polymerase catalytic subunit.